Here is a 427-residue protein sequence, read N- to C-terminus: Isoprenylcysteine alpha-carbonyl methylesterase ICME (427 aa).

A disordered region spans residues 26–59 (EVLPDEDSDRTTLLNGEPLRRRVSGKSPVDEGPR). Helical transmembrane passes span 102 to 122 (LLAL…VAYS) and 157 to 177 (VVVF…GSLL). Substrate contacts are provided by residues 163 to 165 (GGA) and 234 to 236 (QSA). Active-site residues include Ser235, Asp336, and His368.

Belongs to the AB hydrolase superfamily. Isoprenylcysteine methylesterase family. Expressed in roots, rosette and cauline leaves, stems, flowers and siliques.

The protein localises to the endoplasmic reticulum membrane. It localises to the golgi apparatus membrane. It carries out the reaction [protein]-C-terminal S-[(2E,6E)-farnesyl]-L-cysteine methyl ester + H2O = [protein]-C-terminal S-[(2E,6E)-farnesyl]-L-cysteine + methanol + H(+). Catalyzes the demethylation of isoprenylcysteine methylesters. In vitro, is specific for N-acetyl-S-farnesyl-L-cysteine methyl ester (AFCme) and has low activity toward N-acetyl-S-geranyl-L-cysteine methyl ester (AGCme). Acts as a positive regulator of ABA signaling. May be involved in the demethylation and inactivation of isoprenylated negative regulators of abscisic acid (ABA) signaling. Carboxyl methylation is a reversible and potentially regulated step in the post-translational modification of prenylated proteins. This is Isoprenylcysteine alpha-carbonyl methylesterase ICME from Arabidopsis thaliana (Mouse-ear cress).